We begin with the raw amino-acid sequence, 117 residues long: Hainantoxin-XV-2 (117 aa).

Positions 1–20 are cleaved as a signal peptide; the sequence is MKLCAVIIASLLVCVAVASS. A disordered region spans residues 20-55; it reads SSDNQKEFAQEKEMTREETQSLGEHEKDDEVTGSEE. A propeptide spanning residues 21 to 56 is cleaved from the precursor; sequence SDNQKEFAQEKEMTREETQSLGEHEKDDEVTGSEER. The span at 23-55 shows a compositional bias: basic and acidic residues; sequence NQKEFAQEKEMTREETQSLGEHEKDDEVTGSEE. 4 disulfide bridges follow: C58-C72, C65-C78, C69-C115, and C71-C91.

The protein belongs to the neurotoxin 03 (Tx2) family. 02 subfamily. HNTX-XV sub-subfamily. In terms of tissue distribution, expressed by the venom gland.

Its subcellular location is the secreted. In terms of biological role, putative ion channel inhibitor. The chain is Hainantoxin-XV-2 from Cyriopagopus hainanus (Chinese bird spider).